Consider the following 359-residue polypeptide: Peptide chain release factor 1 (359 aa).

N5-methylglutamine is present on Gln-236. Residues 288-307 (QDEQDAERKSTIGTGDRSER) form a disordered region. Basic and acidic residues predominate over residues 293-307 (AERKSTIGTGDRSER).

Belongs to the prokaryotic/mitochondrial release factor family. In terms of processing, methylated by PrmC. Methylation increases the termination efficiency of RF1.

The protein localises to the cytoplasm. Peptide chain release factor 1 directs the termination of translation in response to the peptide chain termination codons UAG and UAA. In Streptococcus gordonii (strain Challis / ATCC 35105 / BCRC 15272 / CH1 / DL1 / V288), this protein is Peptide chain release factor 1 (prfA).